The sequence spans 141 residues: Large ribosomal subunit protein uL11 (141 aa).

Belongs to the universal ribosomal protein uL11 family. In terms of assembly, part of the ribosomal stalk of the 50S ribosomal subunit. Interacts with L10 and the large rRNA to form the base of the stalk. L10 forms an elongated spine to which L12 dimers bind in a sequential fashion forming a multimeric L10(L12)X complex. In terms of processing, one or more lysine residues are methylated.

Forms part of the ribosomal stalk which helps the ribosome interact with GTP-bound translation factors. The polypeptide is Large ribosomal subunit protein uL11 (Fervidobacterium nodosum (strain ATCC 35602 / DSM 5306 / Rt17-B1)).